The chain runs to 155 residues: SsrA-binding protein (155 aa).

Residues arginine 136–tyrosine 155 are disordered.

This sequence belongs to the SmpB family.

The protein localises to the cytoplasm. In terms of biological role, required for rescue of stalled ribosomes mediated by trans-translation. Binds to transfer-messenger RNA (tmRNA), required for stable association of tmRNA with ribosomes. tmRNA and SmpB together mimic tRNA shape, replacing the anticodon stem-loop with SmpB. tmRNA is encoded by the ssrA gene; the 2 termini fold to resemble tRNA(Ala) and it encodes a 'tag peptide', a short internal open reading frame. During trans-translation Ala-aminoacylated tmRNA acts like a tRNA, entering the A-site of stalled ribosomes, displacing the stalled mRNA. The ribosome then switches to translate the ORF on the tmRNA; the nascent peptide is terminated with the 'tag peptide' encoded by the tmRNA and targeted for degradation. The ribosome is freed to recommence translation, which seems to be the essential function of trans-translation. The sequence is that of SsrA-binding protein from Nostoc punctiforme (strain ATCC 29133 / PCC 73102).